Reading from the N-terminus, the 288-residue chain is Nickel/cobalt efflux system RcnA (288 aa).

Topologically, residues 1 to 12 (MGEFSTLLQQGN) are periplasmic. Residues 13-33 (AWFFIPSAILLGVLHGLEPGH) traverse the membrane as a helical segment. Over 34-51 (SKTMMAAFIIAIKGTIKQ) the chain is Cytoplasmic. The chain crosses the membrane as a helical span at residues 52-72 (AVMLGLAATLSHTAVVWLIAL). Residues 73 to 85 (GGMYVSRAFTAES) are Periplasmic-facing. The helical transmembrane segment at 86-106 (VEPWLQLVSAIIILSTAFWMF) threads the bilayer. Topologically, residues 107–188 (WRTWKGERDG…FHDREVTNGQ (82 aa)) are cytoplasmic. Over residues 125-137 (THHHHDHEHHHHD) the composition is skewed to basic residues. Residues 125-144 (THHHHDHEHHHHDHDHDHHH) are disordered. A helical transmembrane segment spans residues 189-209 (ILLFGLTGGLIPCPAAITVLL). The Periplasmic portion of the chain corresponds to 210 to 223 (ICIQLKAFTLGATM). Residues 224-244 (VLCFSIGLALTLVAVGVGAAI) traverse the membrane as a helical segment. Topologically, residues 245–266 (SVQQAAKRWSGFNTLARKAPYF) are cytoplasmic. The chain crosses the membrane as a helical span at residues 267–287 (SSILIGLVGLYMGMHGYLGII). Position 288 (Arg-288) is a topological domain, periplasmic.

Belongs to the NiCoT transporter (TC 2.A.52) family. RcnA subfamily.

Its subcellular location is the cell inner membrane. Efflux system for nickel and cobalt. The chain is Nickel/cobalt efflux system RcnA (rcnA) from Citrobacter koseri (strain ATCC BAA-895 / CDC 4225-83 / SGSC4696).